The sequence spans 327 residues: Phenylalanine--tRNA ligase alpha subunit (327 aa).

Residue Glu-252 coordinates Mg(2+).

It belongs to the class-II aminoacyl-tRNA synthetase family. Phe-tRNA synthetase alpha subunit type 1 subfamily. In terms of assembly, tetramer of two alpha and two beta subunits. Mg(2+) serves as cofactor.

Its subcellular location is the cytoplasm. The enzyme catalyses tRNA(Phe) + L-phenylalanine + ATP = L-phenylalanyl-tRNA(Phe) + AMP + diphosphate + H(+). The chain is Phenylalanine--tRNA ligase alpha subunit from Sodalis glossinidius (strain morsitans).